We begin with the raw amino-acid sequence, 148 residues long: Phosphoribosyl-AMP cyclohydrolase (148 aa).

Asp91 provides a ligand contact to Mg(2+). Cys92 provides a ligand contact to Zn(2+). Positions 93 and 95 each coordinate Mg(2+). Positions 109 and 116 each coordinate Zn(2+).

The protein belongs to the PRA-CH family. In terms of assembly, homodimer. It depends on Mg(2+) as a cofactor. Requires Zn(2+) as cofactor.

It is found in the cytoplasm. The catalysed reaction is 1-(5-phospho-beta-D-ribosyl)-5'-AMP + H2O = 1-(5-phospho-beta-D-ribosyl)-5-[(5-phospho-beta-D-ribosylamino)methylideneamino]imidazole-4-carboxamide. It participates in amino-acid biosynthesis; L-histidine biosynthesis; L-histidine from 5-phospho-alpha-D-ribose 1-diphosphate: step 3/9. In terms of biological role, catalyzes the hydrolysis of the adenine ring of phosphoribosyl-AMP. This is Phosphoribosyl-AMP cyclohydrolase from Rhodopseudomonas palustris (strain HaA2).